An 89-amino-acid chain; its full sequence is Small ribosomal subunit protein uS17 (89 aa).

The protein belongs to the universal ribosomal protein uS17 family. As to quaternary structure, part of the 30S ribosomal subunit.

In terms of biological role, one of the primary rRNA binding proteins, it binds specifically to the 5'-end of 16S ribosomal RNA. This Aromatoleum aromaticum (strain DSM 19018 / LMG 30748 / EbN1) (Azoarcus sp. (strain EbN1)) protein is Small ribosomal subunit protein uS17.